Here is a 265-residue protein sequence, read N- to C-terminus: 2-Cys peroxiredoxin BAS1, chloroplastic (265 aa).

The N-terminal 65 residues, 1–65, are a transit peptide targeting the chloroplast; it reads MACVASSTTL…SSTSRRSFAV (65 aa). The Thioredoxin domain maps to 73–232; sequence PLVGNKAPDF…TMRTLQALQY (160 aa). Cys-119 serves as the catalytic Cysteine sulfenic acid (-SOH) intermediate.

It belongs to the peroxiredoxin family. AhpC/Prx1 subfamily. Homodimer; disulfide-linked, upon oxidation.

The protein localises to the plastid. The protein resides in the chloroplast. The enzyme catalyses a hydroperoxide + [thioredoxin]-dithiol = an alcohol + [thioredoxin]-disulfide + H2O. Functionally, thiol-specific peroxidase that catalyzes the reduction of hydrogen peroxide and organic hydroperoxides to water and alcohols, respectively. Plays a role in cell protection against oxidative stress by detoxifying peroxides. May be an antioxidant enzyme particularly in the developing shoot and photosynthesizing leaf. In Spinacia oleracea (Spinach), this protein is 2-Cys peroxiredoxin BAS1, chloroplastic (BAS1).